Here is a 142-residue protein sequence, read N- to C-terminus: Large ribosomal subunit protein uL13 (142 aa).

The protein belongs to the universal ribosomal protein uL13 family. As to quaternary structure, part of the 50S ribosomal subunit.

Functionally, this protein is one of the early assembly proteins of the 50S ribosomal subunit, although it is not seen to bind rRNA by itself. It is important during the early stages of 50S assembly. This is Large ribosomal subunit protein uL13 from Shewanella baltica (strain OS223).